A 114-amino-acid polypeptide reads, in one-letter code: Large ribosomal subunit protein bL20 (114 aa).

Belongs to the bacterial ribosomal protein bL20 family.

In terms of biological role, binds directly to 23S ribosomal RNA and is necessary for the in vitro assembly process of the 50S ribosomal subunit. It is not involved in the protein synthesizing functions of that subunit. The chain is Large ribosomal subunit protein bL20 from Flavobacterium johnsoniae (strain ATCC 17061 / DSM 2064 / JCM 8514 / BCRC 14874 / CCUG 350202 / NBRC 14942 / NCIMB 11054 / UW101) (Cytophaga johnsonae).